A 343-amino-acid polypeptide reads, in one-letter code: Cytoplasmic tRNA 2-thiolation protein 1 (343 aa).

It belongs to the TtcA family. CTU1/NCS6/ATPBD3 subfamily.

Its subcellular location is the cytoplasm. Its pathway is tRNA modification; 5-methoxycarbonylmethyl-2-thiouridine-tRNA biosynthesis. Functionally, plays a central role in 2-thiolation of mcm(5)S(2)U at tRNA wobble positions of tRNA(Lys), tRNA(Glu) and tRNA(Gln). Directly binds tRNAs and probably acts by catalyzing adenylation of tRNAs, an intermediate required for 2-thiolation. It is unclear whether it acts as a sulfurtransferase that transfers sulfur from thiocarboxylated URM1 onto the uridine of tRNAs at wobble position. In Drosophila grimshawi (Hawaiian fruit fly), this protein is Cytoplasmic tRNA 2-thiolation protein 1.